Consider the following 377-residue polypeptide: Actin-related protein T2 (377 aa).

The protein belongs to the actin family.

Its subcellular location is the cytoplasm. The protein localises to the cytoskeleton. The protein is Actin-related protein T2 (ACTRT2) of Homo sapiens (Human).